The chain runs to 469 residues: MCDLIEPQPAEKIGKMKKLRRTLSESFSRIALKKDDTTFDEICVTKMSTRNCQGMDSVIKPLDTIPEDKKVRVQRTQSTFDPFEKPANQVKRVHSENNACINFKTSSTGKESPKVRRHSSPSSPTSPKFGKADSYEKLEKLGEGSYATVYKGKSKVNGKLVALKVIRLQEEEGTPFTAIREASLLKGLKHANIVLLHDIIHTKETLTLVFEYVHTDLCQYMDKHPGGLHPDNVKLFLFQLLRGLSYIHQRYILHRDLKPQNLLISDTGELKLADFGLARAKSVPSHTYSNEVVTLWYRPPDVLLGSTEYSTCLDMWGVGCIFVEMIQGVAAFPGMKDIQDQLERIFLVLGTPNEDTWPGVHSLPHFKPERFTLYSSKNLRQAWNKLSYVNHAEDLASKLLQCSPKNRLSAQAALSHEYFSDLPPRLWELTDMSSIFTVPNVRLQPEAGESMRAFGKNNSYGKSLSNSKH.

S24, S78, and S95 each carry phosphoserine. Residues 103–133 (FKTSSTGKESPKVRRHSSPSSPTSPKFGKAD) form a disordered region. A Phosphoserine modification is found at S134. Positions 135–419 (YEKLEKLGEG…AQAALSHEYF (285 aa)) constitute a Protein kinase domain. ATP-binding positions include 141–149 (LGEGSYATV) and K164. Catalysis depends on D256, which acts as the Proton acceptor. Residues 449–469 (ESMRAFGKNNSYGKSLSNSKH) are disordered. Over residues 456–469 (KNNSYGKSLSNSKH) the composition is skewed to polar residues.

The protein belongs to the protein kinase superfamily. CMGC Ser/Thr protein kinase family. CDC2/CDKX subfamily. Found in a complex with LRP6, CCNY and CAPRIN2 during G2/M stage; CAPRIN2 functions as a scaffold for the complex by binding to CCNY via its N terminus and to CDK14 via its C terminus. Interacts with CCNY; CCNY mediates its recruitment to the plasma membrane and promotes phosphorylation of LRP6. Interacts with CCDN3 and CDKN1A. Interacts with SEPT8. Interacts with 14-3-3 proteina YWHAB, YWHAE, YWHAH and YWHAQ. In terms of tissue distribution, highly expressed in brain, pancreas, kidney, heart, testis and ovary. Also detected at lower levels in other tissues except in spleen and thymus where expression is barely detected.

It localises to the cell membrane. It is found in the cytoplasm. The protein localises to the nucleus. The enzyme catalyses L-seryl-[protein] + ATP = O-phospho-L-seryl-[protein] + ADP + H(+). It catalyses the reaction L-threonyl-[protein] + ATP = O-phospho-L-threonyl-[protein] + ADP + H(+). With respect to regulation, serine/threonine-protein kinase activity is promoted by associated cyclins CCDN3 and CCNY and repressed by CDKN1A. In terms of biological role, serine/threonine-protein kinase involved in the control of the eukaryotic cell cycle, whose activity is controlled by an associated cyclin. Acts as a cell-cycle regulator of Wnt signaling pathway during G2/M phase by mediating the phosphorylation of LRP6 at 'Ser-1490', leading to the activation of the Wnt signaling pathway. Acts as a regulator of cell cycle progression and cell proliferation via its interaction with CCDN3. Phosphorylates RB1 in vitro, however the relevance of such result remains to be confirmed in vivo. May also play a role in meiosis, neuron differentiation and may indirectly act as a negative regulator of insulin-responsive glucose transport. The protein is Cyclin-dependent kinase 14 (CDK14) of Homo sapiens (Human).